A 319-amino-acid chain; its full sequence is Histone-lysine N-methyltransferase set5 (319 aa).

In terms of domain architecture, SET spans 4–141 (YETEIYKVVP…AGEEILTTYI (138 aa)). Ser316 is modified (phosphoserine). Thr318 bears the Phosphothreonine mark.

The protein belongs to the class V-like SAM-binding methyltransferase superfamily.

It is found in the nucleus. It localises to the chromosome. Its subcellular location is the cytoplasm. The enzyme catalyses L-lysyl-[histone] + S-adenosyl-L-methionine = N(6)-methyl-L-lysyl-[histone] + S-adenosyl-L-homocysteine + H(+). Its function is as follows. Histone methyltransferase that monomethylates 'Lys-5', 'Lys-8' and 'Lys-12' of histone H4 (H4K5me1, H4K8me1 and H4K12me1, respectively), thereby controlling gene expression and remodeling chromatin structures. Monomethylation of 'Lys-5' of histone H4 (H4K5me1) is required for subsequent acetylation and formation of N6-acetyl-N6-methyllysine (H4K5acme). This Schizosaccharomyces pombe (strain 972 / ATCC 24843) (Fission yeast) protein is Histone-lysine N-methyltransferase set5 (set5).